A 129-amino-acid polypeptide reads, in one-letter code: Large ribosomal subunit protein uL22 (129 aa).

This sequence belongs to the universal ribosomal protein uL22 family. In terms of assembly, part of the 50S ribosomal subunit.

This protein binds specifically to 23S rRNA; its binding is stimulated by other ribosomal proteins, e.g. L4, L17, and L20. It is important during the early stages of 50S assembly. It makes multiple contacts with different domains of the 23S rRNA in the assembled 50S subunit and ribosome. Functionally, the globular domain of the protein is located near the polypeptide exit tunnel on the outside of the subunit, while an extended beta-hairpin is found that lines the wall of the exit tunnel in the center of the 70S ribosome. The protein is Large ribosomal subunit protein uL22 of Beijerinckia indica subsp. indica (strain ATCC 9039 / DSM 1715 / NCIMB 8712).